The chain runs to 83 residues: MKILIFIIASFMLIGVWCKEGYPMGRDGCKIPCALNHKFCKTECQAKWKGSDGYCYSTGMSCYCTNLPENAEVWDPNNNKCVG.

A signal peptide spans 1–18; sequence MKILIFIIASFMLIGVWC. The LCN-type CS-alpha/beta domain occupies 19–82; that stretch reads KEGYPMGRDG…VWDPNNNKCV (64 aa). Intrachain disulfides connect Cys29–Cys81, Cys33–Cys55, Cys40–Cys62, and Cys44–Cys64.

The protein belongs to the long (4 C-C) scorpion toxin superfamily. Sodium channel inhibitor family. Beta subfamily. In terms of tissue distribution, expressed by the venom gland.

It is found in the secreted. Its function is as follows. Beta toxins bind voltage-independently at site-4 of sodium channels (Nav) and shift the voltage of activation toward more negative potentials thereby affecting sodium channel activation and promoting spontaneous and repetitive firing. The sequence is that of Putative beta-neurotoxin RjAa10f from Rhopalurus junceus (Caribbean blue scorpion).